The primary structure comprises 180 residues: Negative modulator of initiation of replication (180 aa).

3 interaction with DNA regions span residues 86–87, 115–119, and 149–155; these read AV, RTRVY, and NTNTGRK.

This sequence belongs to the SeqA family. In terms of assembly, homodimer. Polymerizes to form helical filaments.

The protein localises to the cytoplasm. In terms of biological role, negative regulator of replication initiation, which contributes to regulation of DNA replication and ensures that replication initiation occurs exactly once per chromosome per cell cycle. Binds to pairs of hemimethylated GATC sequences in the oriC region, thus preventing assembly of replication proteins and re-initiation at newly replicated origins. Repression is relieved when the region becomes fully methylated. The chain is Negative modulator of initiation of replication from Enterobacter sp. (strain 638).